The sequence spans 754 residues: MKETIQTDWIKSEAFNLENCCNDNPLNILGPHFFKGKWVTRVWMPEADEVNITFKDKTYKTTTPNHKWMFEAILHEDPKNNYQINVLRGGVSHSQQDPWAFKDEWMGEVDRHLFAEGNHHHIWKKMGAHISEDINQKGVMFCIWAPNAKSISIIGDINSWDGRHHPMQKRLGGVWELFMPILKEGDVYKYEIRTQQGHIYEKADPYGFLHEVRPQNGSIISKLNNFNWEDSSWITSRDSSSQINKPISVYEMHLGSWMHDSTDNKYIEKNGNPRHPVPAADLKPGTRFLTYPELTEKLIPYVKERGFTHIELMPISEHPFDGSWGYQVTGWYAPTSRYGTPNEFKEFINKCHAEGIGVILDWVPGHFPKDKHGLAFFDGCHLYEHGDPRIGEHKEWGTLIFNYSRNEVRNFLVANLIYWFEEFHIDGIRVDAVASMLYRDYLRPEGEWIPNENGGNENLEAVKFLQQANHVLFQHFPGALSIAEESTTWPMVTEPTNVGGLGFNLKWNMGWMHDMLDYFEIDPWFRQFHQNSVTFSITYNYTENFMLALSHDEVVHGKSHLLHKMPGDDWKKFANTRALLTYMWTHPGKKTIFMGMEFGQRQEWNVWDDLQWELLEYEPHKGIRNLIDDLNKLYKNEPSLWKNDFDPYGFQWIDCDDTSNSVISFMRRENESNEWLVVIANFTPNFHESYKIGVPLEGYYKEIFNSDGSKYGGSNKGNMGGKDTLKYNIHNYENALEIALPPLSVSIFKHQLKK.

The active-site Nucleophile is the D431. E484 serves as the catalytic Proton donor.

It belongs to the glycosyl hydrolase 13 family. GlgB subfamily. As to quaternary structure, monomer.

The catalysed reaction is Transfers a segment of a (1-&gt;4)-alpha-D-glucan chain to a primary hydroxy group in a similar glucan chain.. The protein operates within glycan biosynthesis; glycogen biosynthesis. In terms of biological role, catalyzes the formation of the alpha-1,6-glucosidic linkages in glycogen by scission of a 1,4-alpha-linked oligosaccharide from growing alpha-1,4-glucan chains and the subsequent attachment of the oligosaccharide to the alpha-1,6 position. The chain is 1,4-alpha-glucan branching enzyme GlgB from Prochlorococcus marinus (strain MIT 9515).